The primary structure comprises 231 residues: Ribosome maturation factor RimM (231 aa).

A disordered region spans residues M1–R29. In terms of domain architecture, PRC barrel spans T150–Y231.

It belongs to the RimM family. As to quaternary structure, binds ribosomal protein uS19.

The protein resides in the cytoplasm. Functionally, an accessory protein needed during the final step in the assembly of 30S ribosomal subunit, possibly for assembly of the head region. Essential for efficient processing of 16S rRNA. May be needed both before and after RbfA during the maturation of 16S rRNA. It has affinity for free ribosomal 30S subunits but not for 70S ribosomes. This Paraburkholderia phymatum (strain DSM 17167 / CIP 108236 / LMG 21445 / STM815) (Burkholderia phymatum) protein is Ribosome maturation factor RimM.